Here is a 68-residue protein sequence, read N- to C-terminus: Small ribosomal subunit protein bS21 (68 aa).

Belongs to the bacterial ribosomal protein bS21 family.

The chain is Small ribosomal subunit protein bS21 from Paracoccus denitrificans (strain Pd 1222).